Reading from the N-terminus, the 185-residue chain is Alcohol dehydrogenase 1 (185 aa).

Residues 10–15 (GLGGVG), aspartate 34, lysine 39, 103–105 (VGV), and arginine 180 each bind NAD(+).

Belongs to the zinc-containing alcohol dehydrogenase family. Class-I subfamily. Homodimer. Zn(2+) is required as a cofactor.

The protein localises to the cytoplasm. The catalysed reaction is a primary alcohol + NAD(+) = an aldehyde + NADH + H(+). The enzyme catalyses a secondary alcohol + NAD(+) = a ketone + NADH + H(+). The polypeptide is Alcohol dehydrogenase 1 (ADH1) (Anas platyrhynchos (Mallard)).